Consider the following 413-residue polypeptide: 1-deoxy-D-xylulose 5-phosphate reductoisomerase (413 aa).

The NADPH site is built by T28, G29, S30, I31, G54, R55, N56, and N142. Position 143 (K143) interacts with 1-deoxy-D-xylulose 5-phosphate. E144 contacts NADPH. D168 contacts Mn(2+). 1-deoxy-D-xylulose 5-phosphate contacts are provided by S169, E170, S194, and H217. E170 contacts Mn(2+). G223 is a binding site for NADPH. 1-deoxy-D-xylulose 5-phosphate-binding residues include S230, N235, K236, and E239. E239 is a Mn(2+) binding site.

It belongs to the DXR family. Mg(2+) is required as a cofactor. Requires Mn(2+) as cofactor.

It carries out the reaction 2-C-methyl-D-erythritol 4-phosphate + NADP(+) = 1-deoxy-D-xylulose 5-phosphate + NADPH + H(+). It functions in the pathway isoprenoid biosynthesis; isopentenyl diphosphate biosynthesis via DXP pathway; isopentenyl diphosphate from 1-deoxy-D-xylulose 5-phosphate: step 1/6. Catalyzes the NADPH-dependent rearrangement and reduction of 1-deoxy-D-xylulose-5-phosphate (DXP) to 2-C-methyl-D-erythritol 4-phosphate (MEP). The polypeptide is 1-deoxy-D-xylulose 5-phosphate reductoisomerase (Thermosynechococcus vestitus (strain NIES-2133 / IAM M-273 / BP-1)).